The following is a 100-amino-acid chain: Aspartyl/glutamyl-tRNA(Asn/Gln) amidotransferase subunit C (100 aa).

This sequence belongs to the GatC family. As to quaternary structure, heterotrimer of A, B and C subunits.

The catalysed reaction is L-glutamyl-tRNA(Gln) + L-glutamine + ATP + H2O = L-glutaminyl-tRNA(Gln) + L-glutamate + ADP + phosphate + H(+). The enzyme catalyses L-aspartyl-tRNA(Asn) + L-glutamine + ATP + H2O = L-asparaginyl-tRNA(Asn) + L-glutamate + ADP + phosphate + 2 H(+). Its function is as follows. Allows the formation of correctly charged Asn-tRNA(Asn) or Gln-tRNA(Gln) through the transamidation of misacylated Asp-tRNA(Asn) or Glu-tRNA(Gln) in organisms which lack either or both of asparaginyl-tRNA or glutaminyl-tRNA synthetases. The reaction takes place in the presence of glutamine and ATP through an activated phospho-Asp-tRNA(Asn) or phospho-Glu-tRNA(Gln). The polypeptide is Aspartyl/glutamyl-tRNA(Asn/Gln) amidotransferase subunit C (Herminiimonas arsenicoxydans).